A 200-amino-acid polypeptide reads, in one-letter code: NAD(P)H dehydrogenase (quinone) (200 aa).

The 187-residue stretch at 4–190 (VLVLYYSTYG…EGARFQGRHV (187 aa)) folds into the Flavodoxin-like domain. FMN contacts are provided by residues 10 to 15 (STYGHV) and 78 to 80 (TRY). Tyrosine 12 is an NAD(+) binding site. Substrate is bound at residue tryptophan 98. FMN-binding positions include 113 to 119 (STASQHG) and histidine 134.

It belongs to the WrbA family. It depends on FMN as a cofactor.

It catalyses the reaction a quinone + NADH + H(+) = a quinol + NAD(+). It carries out the reaction a quinone + NADPH + H(+) = a quinol + NADP(+). The protein is NAD(P)H dehydrogenase (quinone) of Methylobacterium radiotolerans (strain ATCC 27329 / DSM 1819 / JCM 2831 / NBRC 15690 / NCIMB 10815 / 0-1).